The chain runs to 107 residues: ESAT-6-like protein EsxD (107 aa).

This sequence belongs to the WXG100 family. CFP-10 subfamily.

The protein resides in the secreted. The polypeptide is ESAT-6-like protein EsxD (Mycobacterium tuberculosis (strain ATCC 25618 / H37Rv)).